A 389-amino-acid chain; its full sequence is Large envelope protein (389 aa).

Methionine 1 is subject to N-acetylmethionine. Glycine 2 is lipidated: N-myristoyl glycine; by host. Residues 2–108 are pre-S1; the sequence is GQNLSTSNPL…PPLRDTHPQA (107 aa). A pre-S region spans residues 2–163; it reads GQNLSTSNPL…FSTTGDPAPN (162 aa). Residues 2 to 170 are Virion surface; in external conformation-facing; it reads GQNLSTSNPL…APNMENITSG (169 aa). Residues 2–242 are Intravirion; in internal conformation-facing; sequence GQNLSTSNPL…PGYRWMCLRR (241 aa). Residues 75–107 form a disordered region; that stretch reads TTLPANPPPASTNRQSGRQPTPLSPPLRDTHPQ. Residues 85 to 95 show a composition bias toward polar residues; sequence STNRQSGRQPT. The segment at 109–163 is pre-S2; the sequence is MQWNSTTFHQALQDPRVRGLYFPAGGSSSGTLNPVPNTASHISSVFSTTGDPAPN. Residues 171-191 traverse the membrane as a helical segment; the sequence is FLGPLLVLQAGFFLLTKILTI. The Intravirion; in external conformation portion of the chain corresponds to 192-242; it reads PQSLDSWWTSLNFLGGAPVCLGQNSQSPTSNHSPTSCPPICPGYRWMCLRR. A helical transmembrane segment spans residues 243–263; it reads FIIFLFILLLCLIFLLVLLDY. Residues 264 to 337 lie on the Virion surface side of the membrane; that stretch reads QGMLPVCPLI…WASVRFSWLS (74 aa). Residue asparagine 309 is glycosylated (N-linked (GlcNAc...) asparagine; by host). A helical membrane pass occupies residues 338-358; that stretch reads LLAPFVQWFAGLSPTVWLLAI. The Intravirion portion of the chain corresponds to 359 to 364; sequence WMMWYW. A helical membrane pass occupies residues 365–387; that stretch reads GPNLYNILSPFIPLLPIFFCLWV. The Virion surface portion of the chain corresponds to 388–389; sequence YI.

This sequence belongs to the orthohepadnavirus major surface antigen family. In its internal form (Li-HBsAg), interacts with the capsid protein and with the isoform S. Interacts with host chaperone CANX. As to quaternary structure, associates with host chaperone CANX through its pre-S2 N glycan; this association may be essential for isoform M proper secretion. In terms of assembly, interacts with isoform L. Interacts with the antigens of satellite virus HDV (HDVAgs); this interaction is required for encapsidation of HDV genomic RNA. Post-translationally, isoform M is N-terminally acetylated by host at a ratio of 90%, and N-glycosylated by host at the pre-S2 region. In terms of processing, myristoylated.

Its subcellular location is the virion membrane. Functionally, the large envelope protein exists in two topological conformations, one which is termed 'external' or Le-HBsAg and the other 'internal' or Li-HBsAg. In its external conformation the protein attaches the virus to cell receptors and thereby initiating infection. This interaction determines the species specificity and liver tropism. This attachment induces virion internalization predominantly through caveolin-mediated endocytosis. The large envelope protein also assures fusion between virion membrane and endosomal membrane. In its internal conformation the protein plays a role in virion morphogenesis and mediates the contact with the nucleocapsid like a matrix protein. The middle envelope protein plays an important role in the budding of the virion. It is involved in the induction of budding in a nucleocapsid independent way. In this process the majority of envelope proteins bud to form subviral lipoprotein particles of 22 nm of diameter that do not contain a nucleocapsid. In Pan troglodytes (Chimpanzee), this protein is Large envelope protein.